A 525-amino-acid polypeptide reads, in one-letter code: 2-isopropylmalate synthase (525 aa).

The 263-residue stretch at 12–274 folds into the Pyruvate carboxyltransferase domain; the sequence is VVIFDTTLRD…WNKIDTTQLT (263 aa). Asp21, His209, His211, and Asn245 together coordinate Mn(2+). A regulatory domain region spans residues 398–525; it reads KLLSLSVIAG…GHGASAAAAS (128 aa).

The protein belongs to the alpha-IPM synthase/homocitrate synthase family. LeuA type 1 subfamily. In terms of assembly, homodimer. The cofactor is Mn(2+).

It localises to the cytoplasm. It carries out the reaction 3-methyl-2-oxobutanoate + acetyl-CoA + H2O = (2S)-2-isopropylmalate + CoA + H(+). It participates in amino-acid biosynthesis; L-leucine biosynthesis; L-leucine from 3-methyl-2-oxobutanoate: step 1/4. Catalyzes the condensation of the acetyl group of acetyl-CoA with 3-methyl-2-oxobutanoate (2-ketoisovalerate) to form 3-carboxy-3-hydroxy-4-methylpentanoate (2-isopropylmalate). The polypeptide is 2-isopropylmalate synthase (Bradyrhizobium sp. (strain ORS 278)).